Here is a 389-residue protein sequence, read N- to C-terminus: Chorismate synthase (389 aa).

2 residues coordinate NADP(+): Arg39 and Arg45. Residues 130-132, 251-252, Gly296, 311-315, and Arg338 each bind FMN; these read RSS, NA, and KPIPT.

This sequence belongs to the chorismate synthase family. In terms of assembly, homotetramer. FMNH2 serves as cofactor.

It catalyses the reaction 5-O-(1-carboxyvinyl)-3-phosphoshikimate = chorismate + phosphate. Its pathway is metabolic intermediate biosynthesis; chorismate biosynthesis; chorismate from D-erythrose 4-phosphate and phosphoenolpyruvate: step 7/7. In terms of biological role, catalyzes the anti-1,4-elimination of the C-3 phosphate and the C-6 proR hydrogen from 5-enolpyruvylshikimate-3-phosphate (EPSP) to yield chorismate, which is the branch point compound that serves as the starting substrate for the three terminal pathways of aromatic amino acid biosynthesis. This reaction introduces a second double bond into the aromatic ring system. The chain is Chorismate synthase from Oceanobacillus iheyensis (strain DSM 14371 / CIP 107618 / JCM 11309 / KCTC 3954 / HTE831).